We begin with the raw amino-acid sequence, 198 residues long: Phosphoheptose isomerase (198 aa).

The SIS domain occupies 36–198; sequence MARALGADRK…DRTLFGGPGG (163 aa). 51 to 53 contributes to the substrate binding site; that stretch reads NGG. Positions 60 and 64 each coordinate Zn(2+). Residues Glu64, 93–94, 119–121, Ser124, and Gln174 contribute to the substrate site; these read ND and STS. Zn(2+) is bound by residues Gln174 and His182.

It belongs to the SIS family. GmhA subfamily. As to quaternary structure, homotetramer. The cofactor is Zn(2+).

The protein resides in the cytoplasm. It carries out the reaction 2 D-sedoheptulose 7-phosphate = D-glycero-alpha-D-manno-heptose 7-phosphate + D-glycero-beta-D-manno-heptose 7-phosphate. The protein operates within carbohydrate biosynthesis; D-glycero-D-manno-heptose 7-phosphate biosynthesis; D-glycero-alpha-D-manno-heptose 7-phosphate and D-glycero-beta-D-manno-heptose 7-phosphate from sedoheptulose 7-phosphate: step 1/1. Its function is as follows. Catalyzes the isomerization of sedoheptulose 7-phosphate in D-glycero-D-manno-heptose 7-phosphate. In Halorhodospira halophila (strain DSM 244 / SL1) (Ectothiorhodospira halophila (strain DSM 244 / SL1)), this protein is Phosphoheptose isomerase.